The following is a 102-amino-acid chain: Virulence-associated protein A (102 aa).

In terms of domain architecture, HTH cro/C1-type spans 14–69; it reads LKVMYLEPLGLNITETAEKLDMPRSALSEIVNAKRAISPEVAVKLEKAFPKHSASF. Residues 25 to 44 constitute a DNA-binding region (H-T-H motif); sequence NITETAEKLDMPRSALSEIV.

It belongs to the VapA/VapI family.

This is Virulence-associated protein A (vapA) from Dichelobacter nodosus (Bacteroides nodosus).